A 365-amino-acid chain; its full sequence is NAD(P)H-quinone oxidoreductase subunit 1, chloroplastic (365 aa).

The next 6 membrane-spanning stretches (helical) occupy residues 32-52 (LFPI…IVWL), 98-118 (YLFS…YLII), 129-149 (LSIG…GLLM), 257-279 (LFYV…LYLG), 302-322 (VFGT…FLFI), and 338-358 (LLNL…LLTT).

Belongs to the complex I subunit 1 family. As to quaternary structure, NDH is composed of at least 16 different subunits, 5 of which are encoded in the nucleus.

The protein localises to the plastid. Its subcellular location is the chloroplast thylakoid membrane. The catalysed reaction is a plastoquinone + NADH + (n+1) H(+)(in) = a plastoquinol + NAD(+) + n H(+)(out). The enzyme catalyses a plastoquinone + NADPH + (n+1) H(+)(in) = a plastoquinol + NADP(+) + n H(+)(out). Its function is as follows. NDH shuttles electrons from NAD(P)H:plastoquinone, via FMN and iron-sulfur (Fe-S) centers, to quinones in the photosynthetic chain and possibly in a chloroplast respiratory chain. The immediate electron acceptor for the enzyme in this species is believed to be plastoquinone. Couples the redox reaction to proton translocation, and thus conserves the redox energy in a proton gradient. This chain is NAD(P)H-quinone oxidoreductase subunit 1, chloroplastic, found in Spinacia oleracea (Spinach).